Reading from the N-terminus, the 453-residue chain is Carbamoyl phosphate synthase arginine-specific small chain (453 aa).

The N-terminal 13 residues, 1-13, are a transit peptide targeting the mitochondrion; that stretch reads MFSKLAANFAQRA. Residues 233–420 enclose the Glutamine amidotransferase type-1 domain; sequence HVALIDCGVK…LENVRAAKSA (188 aa). The Nucleophile role is filled by C309. Residues H393 and E395 contribute to the active site.

The protein belongs to the CarA family. Heterodimer composed of 2 chains; the small (or glutamine) chain promotes the hydrolysis of glutamine to ammonia, which is used by the large (or ammonia) chain to synthesize carbamoyl phosphate.

Its subcellular location is the mitochondrion matrix. The enzyme catalyses hydrogencarbonate + L-glutamine + 2 ATP + H2O = carbamoyl phosphate + L-glutamate + 2 ADP + phosphate + 2 H(+). It catalyses the reaction L-glutamine + H2O = L-glutamate + NH4(+). The protein operates within amino-acid biosynthesis; L-arginine biosynthesis; carbamoyl phosphate from bicarbonate: step 1/1. In terms of biological role, small subunit of the arginine-specific carbamoyl phosphate synthase (CPSase). CPSase catalyzes the formation of carbamoyl phosphate from the ammonia moiety of glutamine, carbonate, and phosphate donated by ATP, the first step of the arginine biosynthetic pathway. The small subunit (glutamine amidotransferase) binds and cleaves glutamine to supply the large subunit with the substrate ammonia. The chain is Carbamoyl phosphate synthase arginine-specific small chain (cpa1) from Hypocrea virens (Gliocladium virens).